Consider the following 329-residue polypeptide: Flotillin-like protein FloA (329 aa).

Helical transmembrane passes span 5-25 (IFLL…LSFI) and 27-47 (LGLW…TLVG).

This sequence belongs to the flotillin-like FloA family. Homooligomerizes.

It is found in the cell membrane. Its subcellular location is the membrane raft. Functionally, found in functional membrane microdomains (FMM) that may be equivalent to eukaryotic membrane rafts. FMMs are highly dynamic and increase in number as cells age. Flotillins are thought to be important factors in membrane fluidity. In Thermoanaerobacter sp. (strain X514), this protein is Flotillin-like protein FloA.